The chain runs to 409 residues: Arginine deiminase (409 aa).

C398 (amidino-cysteine intermediate) is an active-site residue.

The protein belongs to the arginine deiminase family.

The protein resides in the cytoplasm. It catalyses the reaction L-arginine + H2O = L-citrulline + NH4(+). It participates in amino-acid degradation; L-arginine degradation via ADI pathway; carbamoyl phosphate from L-arginine: step 1/2. This chain is Arginine deiminase, found in Metamycoplasma arthritidis (strain 158L3-1) (Mycoplasma arthritidis).